A 279-amino-acid polypeptide reads, in one-letter code: Tryptophan 2,3-dioxygenase (279 aa).

Residues 48–52 (FIVIH), Y110, and R114 each bind substrate. Residue H237 participates in heme binding. T251 is a binding site for substrate.

Belongs to the tryptophan 2,3-dioxygenase family. In terms of assembly, homotetramer. Heme serves as cofactor.

It carries out the reaction L-tryptophan + O2 = N-formyl-L-kynurenine. The protein operates within amino-acid degradation; L-tryptophan degradation via kynurenine pathway; L-kynurenine from L-tryptophan: step 1/2. Functionally, heme-dependent dioxygenase that catalyzes the oxidative cleavage of the L-tryptophan (L-Trp) pyrrole ring and converts L-tryptophan to N-formyl-L-kynurenine. Catalyzes the oxidative cleavage of the indole moiety. This is Tryptophan 2,3-dioxygenase from Bacillus thuringiensis (strain Al Hakam).